The sequence spans 56 residues: Large ribosomal subunit protein bL32 (56 aa).

The disordered stretch occupies residues 1–35; the sequence is MAVQQNKSTRSKRGMRRSHHALRSVTISVDRTSGE. The segment covering 9–22 has biased composition (basic residues); sequence TRSKRGMRRSHHAL.

The protein belongs to the bacterial ribosomal protein bL32 family.

The sequence is that of Large ribosomal subunit protein bL32 from Blochmanniella pennsylvanica (strain BPEN).